A 227-amino-acid chain; its full sequence is Transmembrane emp24 domain-containing protein 4 (227 aa).

The first 29 residues, 1–29 (MAGVGAGPLRAMGRQALLLLALCATGAQG), serve as a signal peptide directing secretion. Residues 30–194 (LYFHIGETEK…RLTSESTNQR (165 aa)) are Lumenal-facing. In terms of domain architecture, GOLD spans 39-137 (KRCFIEEIPD…KLRVHLDIQV (99 aa)). Residue N117 is glycosylated (N-linked (GlcNAc...) asparagine). Residues 147-176 (IAAKDKLTELQLRARQLLDQVEQIQKEQDY) adopt a coiled-coil conformation. Residues 195-212 (VLWWSIAQTVILILTGIW) form a helical membrane-spanning segment. Residues 213 to 227 (QMRHLKSFFEAKKLV) are Cytoplasmic-facing. The short motif at 220 to 221 (FF) is the COPII vesicle coat-binding element. Residues 220–227 (FFEAKKLV) carry the COPI vesicle coat-binding motif.

The protein belongs to the EMP24/GP25L family.

It is found in the endoplasmic reticulum membrane. Its function is as follows. Involved in vesicular protein trafficking, mainly in the early secretory pathway. targeting. Involved in the maintenance of the Golgi apparatus. Appears to play a role in the biosynthesis of secreted cargo including processing. Involved in endoplasmic reticulum stress response. May play a role in the regulation of heat-shock response and apoptosis. This Homo sapiens (Human) protein is Transmembrane emp24 domain-containing protein 4 (TMED4).